The sequence spans 395 residues: Gastric triacylglycerol lipase (395 aa).

The first 18 residues, 1–18 (MWLLLITSVISTFGGAHG), serve as a signal peptide directing secretion. 3 N-linked (GlcNAc...) asparagine glycosylation sites follow: N33, N68, and N98. An AB hydrolase-1 domain is found at 77-376 (PVVYLQHGLI…LAYNHLDFIW (300 aa)). S171 (nucleophile) is an active-site residue. Cysteines 245 and 254 form a disulfide. N270 is a glycosylation site (N-linked (GlcNAc...) asparagine). Active-site charge relay system residues include D342 and H371.

Belongs to the AB hydrolase superfamily. Lipase family. In terms of tissue distribution, secreted by the serous (von Ebner's) glands at the back of the rat tongue.

It localises to the secreted. It catalyses the reaction a triacylglycerol + H2O = a diacylglycerol + a fatty acid + H(+). The enzyme catalyses 1,2,3-tri-(9Z-octadecenoyl)-glycerol + H2O = 1,2-di-(9Z-octadecenoyl)-sn-glycerol + (9Z)-octadecenoate + H(+). The catalysed reaction is 1,2,3-trioctanoylglycerol + H2O = 1,2-dioctanoyl-sn-glycerol + octanoate + H(+). Its function is as follows. Catalyzes the hydrolysis of triacylglycerols to yield free fatty acids, diacylglycerol, monoacylglycerol, and glycerol. Shows a preferential hydrolysis at the sn-3 position of triacylglycerol. This Rattus norvegicus (Rat) protein is Gastric triacylglycerol lipase (Lipf).